The primary structure comprises 333 residues: 1D-myo-inositol 2-acetamido-2-deoxy-alpha-D-glucopyranoside deacetylase (333 aa).

3 residues coordinate Zn(2+): H18, D21, and H165.

Belongs to the MshB deacetylase family. It depends on Zn(2+) as a cofactor.

The enzyme catalyses 1D-myo-inositol 2-acetamido-2-deoxy-alpha-D-glucopyranoside + H2O = 1D-myo-inositol 2-amino-2-deoxy-alpha-D-glucopyranoside + acetate. Catalyzes the deacetylation of 1D-myo-inositol 2-acetamido-2-deoxy-alpha-D-glucopyranoside (GlcNAc-Ins) in the mycothiol biosynthesis pathway. The sequence is that of 1D-myo-inositol 2-acetamido-2-deoxy-alpha-D-glucopyranoside deacetylase from Corynebacterium jeikeium (strain K411).